Reading from the N-terminus, the 354-residue chain is Transcriptional regulator URE2 (354 aa).

N-acetylmethionine is present on methionine 2. The segment at 2-89 (MNNNGNQVSN…TLEQHRQQQQ (88 aa)) is prion domain (PrD). Residues 22-42 (GNRNSNTTTDQSNINFEFSTG) are compositionally biased toward polar residues. A disordered region spans residues 22–76 (GNRNSNTTTDQSNINFEFSTGVNNNNNNNSSSNNNNVQNNNSGRNGSQNNDNENN). Low complexity predominate over residues 43–73 (VNNNNNNNSSSNNNNVQNNNSGRNGSQNNDN). A GST N-terminal domain is found at 112 to 196 (EGYTLFSHRS…HLVNKYYKET (85 aa)). Glutathione contacts are provided by residues asparagine 124, histidine 151, 164–165 (RV), and 180–181 (ES). One can recognise a GST C-terminal domain in the interval 205-354 (DLADQSQINA…PAVIKALRGE (150 aa)).

Belongs to the GST superfamily. As to quaternary structure, homodimer. Interacts with NNK1.

Its subcellular location is the cytoplasm. The enzyme catalyses 2 glutathione + H2O2 = glutathione disulfide + 2 H2O. Functionally, plays an important role in nitrogen catabolite repression. Down-regulates the expression of many genes involved in nitrogen utilization by inhibiting the GATA transcriptional activators GLN3 and GAT1. Under good nitrogen conditions, binds to the phosphorylated forms of GLN3 and GAT1 and sequesters them in the cytoplasm, preventing transcription of genes expressed upon nitrogen limitation. Is also an atypical glutaredoxin without a catalytical cysteine residue. Has glutathione peroxidase and thiol:disulfide oxidoreductase activities in both native and fibrillar form. Also shows insulin disulfide reductase and dehydroascorbic acid reductase (DHAR) activities. The polypeptide is Transcriptional regulator URE2 (URE2) (Saccharomyces cerevisiae (strain ATCC 204508 / S288c) (Baker's yeast)).